The primary structure comprises 353 residues: MAQARNSRIKVGIVGGTGYTGVELLRLLSQHPDVELTAITSRKEDGLPVAEMYPNLRGHVKLAFSAPEKASLTDCDVVFFATPHGVAMAQAQALTAAGTRVIDLAADFRLQDTASFERWYKMPHGCPDILAKQSAYGLVELNRAAIAQAQVIGNPGCYPTTVILGLAPLLERKLIDTQALIADCKSGVSGAGRKAEVASLFSEASDNFKAYGVAGHRHHPEITEQLEKLAGGKVGLTFVPHLVPMIRGMFSTIYARILPEARETDFQALFEERYAGEAFIDVMPAGSLPETRSVRASNNLRIAVQRPGNGDQLIVLVVQDNLVKGAAGQAVQNMNLMFGLPETTGLNQVAILP.

Residue Cys157 is part of the active site.

Belongs to the NAGSA dehydrogenase family. Type 1 subfamily.

Its subcellular location is the cytoplasm. It catalyses the reaction N-acetyl-L-glutamate 5-semialdehyde + phosphate + NADP(+) = N-acetyl-L-glutamyl 5-phosphate + NADPH + H(+). It functions in the pathway amino-acid biosynthesis; L-arginine biosynthesis; N(2)-acetyl-L-ornithine from L-glutamate: step 3/4. Its function is as follows. Catalyzes the NADPH-dependent reduction of N-acetyl-5-glutamyl phosphate to yield N-acetyl-L-glutamate 5-semialdehyde. This is N-acetyl-gamma-glutamyl-phosphate reductase from Bordetella avium (strain 197N).